A 67-amino-acid chain; its full sequence is Small ribosomal subunit protein eS31 (67 aa).

Zn(2+) contacts are provided by C35, C38, C54, and C57. The C4-type zinc-finger motif lies at 35–57 (CPRCGSIMAHHMKPLERWACGKC).

The protein belongs to the eukaryotic ribosomal protein eS31 family. Part of the 30S ribosomal subunit. Requires Zn(2+) as cofactor.

The sequence is that of Small ribosomal subunit protein eS31 from Sulfolobus acidocaldarius (strain ATCC 33909 / DSM 639 / JCM 8929 / NBRC 15157 / NCIMB 11770).